Here is a 357-residue protein sequence, read N- to C-terminus: Red-sensitive opsin (357 aa).

The Extracellular portion of the chain corresponds to Met1–Val49. The N-linked (GlcNAc...) asparagine glycan is linked to Asn31. A helical membrane pass occupies residues Tyr50–Ala74. The Cytoplasmic portion of the chain corresponds to Ser75 to Asn86. Residues Trp87–Phe112 traverse the membrane as a helical segment. Over Phe113–Glu126 the chain is Extracellular. Cys123 and Cys200 form a disulfide bridge. Residues Gly127–Trp146 traverse the membrane as a helical segment. The Cytoplasmic segment spans residues Glu147–Met165. A helical transmembrane segment spans residues Ala166–Ser189. The Extracellular segment spans residues Arg190 to Ser215. The helical transmembrane segment at Tyr216–Ile243 threads the bilayer. Over Arg244 to Arg265 the chain is Cytoplasmic. Residues Met266–Ala289 traverse the membrane as a helical segment. The Extracellular portion of the chain corresponds to Ala290 to His297. Residues Pro298 to Met322 traverse the membrane as a helical segment. Residue Lys309 is modified to N6-(retinylidene)lysine. At Asn323 to Ala357 the chain is on the cytoplasmic side.

It belongs to the G-protein coupled receptor 1 family. Opsin subfamily. Post-translationally, phosphorylated on some or all of the serine and threonine residues present in the C-terminal region. The color pigments are found in the cone photoreceptor cells.

The protein localises to the membrane. Functionally, visual pigments are the light-absorbing molecules that mediate vision. They consist of an apoprotein, opsin, covalently linked to cis-retinal. The polypeptide is Red-sensitive opsin (R007) (Psalidodon fasciatus (Banded astyanax)).